A 222-amino-acid chain; its full sequence is N-(5'-phosphoribosyl)anthranilate isomerase (222 aa).

Belongs to the TrpF family.

The enzyme catalyses N-(5-phospho-beta-D-ribosyl)anthranilate = 1-(2-carboxyphenylamino)-1-deoxy-D-ribulose 5-phosphate. It participates in amino-acid biosynthesis; L-tryptophan biosynthesis; L-tryptophan from chorismate: step 3/5. In Rhizobium leguminosarum bv. trifolii (strain WSM2304), this protein is N-(5'-phosphoribosyl)anthranilate isomerase.